Consider the following 244-residue polypeptide: UDP-2,3-diacylglucosamine hydrolase (244 aa).

Mn(2+) is bound by residues Asp-8, His-10, Asp-41, Asn-79, and His-114. 79–80 (NR) is a substrate binding site. Residues Asp-122, Ser-160, Asn-164, Lys-167, and His-195 each coordinate substrate. 2 residues coordinate Mn(2+): His-195 and His-197.

Belongs to the LpxH family. It depends on Mn(2+) as a cofactor.

It is found in the cell inner membrane. The enzyme catalyses UDP-2-N,3-O-bis[(3R)-3-hydroxytetradecanoyl]-alpha-D-glucosamine + H2O = 2-N,3-O-bis[(3R)-3-hydroxytetradecanoyl]-alpha-D-glucosaminyl 1-phosphate + UMP + 2 H(+). The protein operates within glycolipid biosynthesis; lipid IV(A) biosynthesis; lipid IV(A) from (3R)-3-hydroxytetradecanoyl-[acyl-carrier-protein] and UDP-N-acetyl-alpha-D-glucosamine: step 4/6. Functionally, hydrolyzes the pyrophosphate bond of UDP-2,3-diacylglucosamine to yield 2,3-diacylglucosamine 1-phosphate (lipid X) and UMP by catalyzing the attack of water at the alpha-P atom. Involved in the biosynthesis of lipid A, a phosphorylated glycolipid that anchors the lipopolysaccharide to the outer membrane of the cell. This Hahella chejuensis (strain KCTC 2396) protein is UDP-2,3-diacylglucosamine hydrolase.